The primary structure comprises 585 residues: Lipoprotein LpqB (585 aa).

Residues 1–17 form the signal peptide; that stretch reads MGRKLLGLLMLAVLLAG. Residue Cys-18 is the site of N-palmitoyl cysteine attachment. Cys-18 is lipidated: S-diacylglycerol cysteine. Disordered stretches follow at residues 24–46 and 560–585; these read SSAPQAIGTVERPAPSNLPKPTP and PSADGQQGWSEVPGLTVPGAAPVLPG.

Belongs to the LpqB lipoprotein family.

Its subcellular location is the cell membrane. The protein is Lipoprotein LpqB of Mycobacterium paratuberculosis.